Consider the following 260-residue polypeptide: Ribosomal protein L11 methyltransferase (260 aa).

S-adenosyl-L-methionine contacts are provided by Thr-119, Gly-140, Asp-162, and Asn-203.

Belongs to the methyltransferase superfamily. PrmA family.

It is found in the cytoplasm. It carries out the reaction L-lysyl-[protein] + 3 S-adenosyl-L-methionine = N(6),N(6),N(6)-trimethyl-L-lysyl-[protein] + 3 S-adenosyl-L-homocysteine + 3 H(+). In terms of biological role, methylates ribosomal protein L11. The chain is Ribosomal protein L11 methyltransferase from Thermosipho africanus (strain TCF52B).